Here is a 139-residue protein sequence, read N- to C-terminus: Endoribonuclease YbeY (139 aa).

Zn(2+)-binding residues include His99, His103, and His109.

It belongs to the endoribonuclease YbeY family. Zn(2+) is required as a cofactor.

It is found in the cytoplasm. Functionally, single strand-specific metallo-endoribonuclease involved in late-stage 70S ribosome quality control and in maturation of the 3' terminus of the 16S rRNA. In Nautilia profundicola (strain ATCC BAA-1463 / DSM 18972 / AmH), this protein is Endoribonuclease YbeY.